A 253-amino-acid chain; its full sequence is Hydroxypyruvate/pyruvate aldolase (253 aa).

His48 acts as the Proton acceptor in catalysis. Glu151 and Asp177 together coordinate a divalent metal cation.

It belongs to the HpcH/HpaI aldolase family. It depends on a divalent metal cation as a cofactor.

It carries out the reaction D-glyceraldehyde + pyruvate = 2-dehydro-3-deoxy-L-galactonate. Its function is as follows. Aldolase which can catalyze in vitro the aldolisation reaction between hydroxypyruvate (HPA) or pyruvate (PA) and D-glyceraldehyde (D-GA). The condensation of pyruvate and D-glyceraldehyde produces 2-dehydro-3-deoxy-L-galactonate. Has weak activity with hydroxypyruvate and D-glyceraldehyde. The polypeptide is Hydroxypyruvate/pyruvate aldolase (Sagittula stellata (strain ATCC 700073 / DSM 11524 / E-37)).